Consider the following 214-residue polypeptide: Thymidylate kinase (214 aa).

An ATP-binding site is contributed by 15–22 (GLEGAGKT).

Belongs to the thymidylate kinase family.

The catalysed reaction is dTMP + ATP = dTDP + ADP. Its function is as follows. Phosphorylation of dTMP to form dTDP in both de novo and salvage pathways of dTTP synthesis. The polypeptide is Thymidylate kinase (Haemophilus ducreyi (strain 35000HP / ATCC 700724)).